Here is a 199-residue protein sequence, read N- to C-terminus: Outer-membrane lipoprotein LolB (199 aa).

Positions 1 to 28 (MSACPAPRSPVRWLHAFTLFLLLAVLAG) are cleaved as a signal peptide. Cys29 is lipidated: N-palmitoyl cysteine. Cys29 is lipidated: S-diacylglycerol cysteine.

The protein belongs to the LolB family. As to quaternary structure, monomer.

Its subcellular location is the cell outer membrane. Functionally, plays a critical role in the incorporation of lipoproteins in the outer membrane after they are released by the LolA protein. In Bordetella pertussis (strain Tohama I / ATCC BAA-589 / NCTC 13251), this protein is Outer-membrane lipoprotein LolB.